Reading from the N-terminus, the 338-residue chain is Heat-inducible transcription repressor HrcA (338 aa).

The protein belongs to the HrcA family.

In terms of biological role, negative regulator of class I heat shock genes (grpE-dnaK-dnaJ and groELS operons). Prevents heat-shock induction of these operons. The sequence is that of Heat-inducible transcription repressor HrcA from Bacillus cereus (strain AH187).